The chain runs to 196 residues: MQPEVEPLISPNLGAPGSHRETGSFLVDLESMEESMSRSLGKPAKSSKQYLRQVISEYEALDRELPCIRKFSEPPSAQPLCLCMETSEDFTHVEVLQALEAELPGAMESGRVNSIRYENMNVICGTAGRRDRWLITVTDFQTRSRLLRSGLTLRGTAYPLVRHDDLLLGDYRLHLRRSLVRRRMLEALGAEPADED.

Residues 1 to 21 (MQPEVEPLISPNLGAPGSHRE) are disordered.

This is an uncharacterized protein from Mus musculus (Mouse).